A 489-amino-acid chain; its full sequence is MGEARRGQNPHHVLGYGFHGTTLPNSMASANLFEQGGGGGGGAAYFGELEEALVHQVATLRRRAQQTATTTTSHHGHTTPFSTAAAAATATATARPPATLDIFPSWPMRRSSLPTPKDGCSNVTADTTDSESSSKNNGDQGAAAADMASQFDQIPQQQQKQHKKMAASSTHSDHRMTKTLDPKIMRRLAQNREAARKSRLRKKAYIQQLESSKLRLAQMEQDLERARSQGLLLGGSPGGNTSAGAAMFDAEYGRWLEDGGRRMAELHGGLHAHLPDGDLRAIVDDALAHYDELFRLRAAAAKADVFHLITGTWATPAERCFLWMGGFQPSDLLKTVAPQLDPLTEQQVVGICSLQQSSQQAEEALSQGLEQLHQSLAETVANGGSVVNEASLGSFMGYMALALGKLSNLEGFVIQADNLRQQTLHQMHRILTIRQAARCFLAIGEYHNRLRALSSLWASRPREILVADEGNCGELSIAAQPSESQFSAF.

A compositionally biased stretch (low complexity) spans 87-99; sequence AATATATARPPAT. Residues 87–181 are disordered; it reads AATATATARP…SDHRMTKTLD (95 aa). A compositionally biased stretch (polar residues) spans 121–139; sequence SNVTADTTDSESSSKNNGD. A compositionally biased stretch (low complexity) spans 148-159; the sequence is ASQFDQIPQQQQ. Residues 171 to 181 are compositionally biased toward basic and acidic residues; that stretch reads HSDHRMTKTLD. The region spanning 181–225 is the bZIP domain; sequence DPKIMRRLAQNREAARKSRLRKKAYIQQLESSKLRLAQMEQDLER. The tract at residues 183 to 203 is basic motif; it reads KIMRRLAQNREAARKSRLRKK. A leucine-zipper region spans residues 209 to 223; sequence LESSKLRLAQMEQDL. Residues 245 to 460 enclose the DOG1 domain; that stretch reads AAMFDAEYGR…RALSSLWASR (216 aa).

Belongs to the bZIP family.

It is found in the nucleus. Functionally, transcriptional regulator involved in defense response. In Oryza sativa subsp. japonica (Rice), this protein is Transcription factor TGAL11.